Consider the following 363-residue polypeptide: UDP-N-acetylglucosamine--N-acetylmuramyl-(pentapeptide) pyrophosphoryl-undecaprenol N-acetylglucosamine transferase (363 aa).

Residues 15 to 17 (TGG), N127, R163, S191, I244, 263 to 268 (ALTVSE), and Q288 contribute to the UDP-N-acetyl-alpha-D-glucosamine site.

Belongs to the glycosyltransferase 28 family. MurG subfamily.

It is found in the cell inner membrane. The enzyme catalyses di-trans,octa-cis-undecaprenyl diphospho-N-acetyl-alpha-D-muramoyl-L-alanyl-D-glutamyl-meso-2,6-diaminopimeloyl-D-alanyl-D-alanine + UDP-N-acetyl-alpha-D-glucosamine = di-trans,octa-cis-undecaprenyl diphospho-[N-acetyl-alpha-D-glucosaminyl-(1-&gt;4)]-N-acetyl-alpha-D-muramoyl-L-alanyl-D-glutamyl-meso-2,6-diaminopimeloyl-D-alanyl-D-alanine + UDP + H(+). It participates in cell wall biogenesis; peptidoglycan biosynthesis. Functionally, cell wall formation. Catalyzes the transfer of a GlcNAc subunit on undecaprenyl-pyrophosphoryl-MurNAc-pentapeptide (lipid intermediate I) to form undecaprenyl-pyrophosphoryl-MurNAc-(pentapeptide)GlcNAc (lipid intermediate II). This Pectobacterium carotovorum subsp. carotovorum (strain PC1) protein is UDP-N-acetylglucosamine--N-acetylmuramyl-(pentapeptide) pyrophosphoryl-undecaprenol N-acetylglucosamine transferase.